A 158-amino-acid polypeptide reads, in one-letter code: 2-C-methyl-D-erythritol 2,4-cyclodiphosphate synthase (158 aa).

Residues D9 and H11 each coordinate a divalent metal cation. Residues 9-11 (DVH) and 35-36 (HS) contribute to the 4-CDP-2-C-methyl-D-erythritol 2-phosphate site. H43 is an a divalent metal cation binding site. 4-CDP-2-C-methyl-D-erythritol 2-phosphate is bound by residues 57–59 (DIG), 62–66 (FPDTD), 101–107 (AQKPKMA), 133–136 (TTTE), F140, and R143.

Belongs to the IspF family. In terms of assembly, homotrimer. Requires a divalent metal cation as cofactor.

It catalyses the reaction 4-CDP-2-C-methyl-D-erythritol 2-phosphate = 2-C-methyl-D-erythritol 2,4-cyclic diphosphate + CMP. Its pathway is isoprenoid biosynthesis; isopentenyl diphosphate biosynthesis via DXP pathway; isopentenyl diphosphate from 1-deoxy-D-xylulose 5-phosphate: step 4/6. In terms of biological role, involved in the biosynthesis of isopentenyl diphosphate (IPP) and dimethylallyl diphosphate (DMAPP), two major building blocks of isoprenoid compounds. Catalyzes the conversion of 4-diphosphocytidyl-2-C-methyl-D-erythritol 2-phosphate (CDP-ME2P) to 2-C-methyl-D-erythritol 2,4-cyclodiphosphate (ME-CPP) with a corresponding release of cytidine 5-monophosphate (CMP). The protein is 2-C-methyl-D-erythritol 2,4-cyclodiphosphate synthase of Bacillus pumilus (strain SAFR-032).